The sequence spans 345 residues: ATP-dependent (S)-NAD(P)H-hydrate dehydratase (345 aa).

In terms of domain architecture, YjeF C-terminal spans 9 to 332; it reads ILSLARSMIP…DMVGEVYEEV (324 aa). Residues G113 and 170 to 176 contribute to the (6S)-NADPHX site; that span reads NVMEFKR. Residues 208–212 and 241–250 contribute to the ATP site; these read KGPSD and GGLKRVGGQG. D251 is a binding site for (6S)-NADPHX.

Belongs to the NnrD/CARKD family. Requires Mg(2+) as cofactor.

Its subcellular location is the cytoplasm. The catalysed reaction is (6S)-NADHX + ATP = ADP + phosphate + NADH + H(+). The enzyme catalyses (6S)-NADPHX + ATP = ADP + phosphate + NADPH + H(+). Its function is as follows. Catalyzes the dehydration of the S-form of NAD(P)HX at the expense of ATP, which is converted to ADP. Together with NAD(P)HX epimerase, which catalyzes the epimerization of the S- and R-forms, the enzyme allows the repair of both epimers of NAD(P)HX, a damaged form of NAD(P)H that is a result of enzymatic or heat-dependent hydration. The polypeptide is ATP-dependent (S)-NAD(P)H-hydrate dehydratase (Cryptococcus neoformans var. neoformans serotype D (strain JEC21 / ATCC MYA-565) (Filobasidiella neoformans)).